A 283-amino-acid polypeptide reads, in one-letter code: Demethylrebeccamycin-D-glucose O-methyltransferase (283 aa).

S-adenosyl-L-methionine is bound by residues Ser101, Gln106, 129-130 (DA), Leu146, and His151.

It belongs to the methyltransferase superfamily. Monomer.

It catalyses the reaction 4'-demethylrebeccamycin + S-adenosyl-L-methionine = rebeccamycin + S-adenosyl-L-homocysteine + H(+). In terms of biological role, glycosyl O-methyltransferase that catalyzes the final step in the biosynthesis of rebeccamycin, an indolocarbazole alkaloid that inhibits topoisomerase 1. Has broad substrate specificity and functions as glycosyl O-methyltransferase on a number of rebeccamycin analogs. The protein is Demethylrebeccamycin-D-glucose O-methyltransferase (rebM) of Lentzea aerocolonigenes (Lechevalieria aerocolonigenes).